Here is a 389-residue protein sequence, read N- to C-terminus: Type III polyketide synthase 21 (389 aa).

Cysteine 170 acts as the Nucleophile in catalysis.

Belongs to the thiolase-like superfamily. Chalcone/stilbene synthases family. In terms of tissue distribution, expressed in anthers. Expressed in young and adult flowers.

Plant type III polyketide synthases (PKSs) that catalyzes the condensation of fatty acyl-CoA with malonyl-CoA to generate triketide and tetraketide alpha-pyrones, the main components of pollen exine and potential sporopollenin precursors. This chain is Type III polyketide synthase 21 (PKS21), found in Oryza sativa subsp. japonica (Rice).